Reading from the N-terminus, the 282-residue chain is Transmembrane protein 41B (282 aa).

Positions 1-36 are disordered; it reads MAKKRAGNRETESSPLVEQEPRPSKETPVPKGAQSP. Transmembrane regions (helical) follow at residues 43–63, 102–122, 138–160, 188–208, 216–236, and 251–271; these read MSIL…YLVF, TQVL…AIPG, LALF…LSYL, LINY…FINI, PLGV…FVAI, and AVSW…ILPV. Residues 131-242 form a VTT domain; required for its function in autophagy region; it reads GYLYPFPLAL…FVAINAGTTL (112 aa).

It belongs to the TMEM41 family.

It localises to the endoplasmic reticulum membrane. The protein localises to the endomembrane system. The enzyme catalyses a 1,2-diacyl-sn-glycero-3-phospho-L-serine(in) = a 1,2-diacyl-sn-glycero-3-phospho-L-serine(out). The catalysed reaction is cholesterol(in) = cholesterol(out). It carries out the reaction a 1,2-diacyl-sn-glycero-3-phosphocholine(in) = a 1,2-diacyl-sn-glycero-3-phosphocholine(out). It catalyses the reaction a 1,2-diacyl-sn-glycero-3-phosphoethanolamine(in) = a 1,2-diacyl-sn-glycero-3-phosphoethanolamine(out). Phospholipid scramblase involved in lipid homeostasis and membrane dynamics processes. Has phospholipid scramblase activity toward cholesterol and phosphatidylserine, as well as phosphatidylethanolamine and phosphatidylcholine. Required for autophagosome formation: participates in early stages of autophagosome biogenesis at the endoplasmic reticulum (ER) membrane by reequilibrating the leaflets of the ER as lipids are extracted by atg2 (atg2a or atg2b) to mediate autophagosome assembly. In addition to autophagy, involved in other processes in which phospholipid scramblase activity is required. Required for normal motor neuron development. The chain is Transmembrane protein 41B from Danio rerio (Zebrafish).